Here is a 219-residue protein sequence, read N- to C-terminus: Membrin-12 (219 aa).

An N-acetylalanine modification is found at Ala-2. Residues 2-197 are Cytoplasmic-facing; sequence ASGTVGGLSE…LIERRNRVDT (196 aa). The chain crosses the membrane as a helical; Anchor for type IV membrane protein span at residues 198–215; it reads WIKYAGMIATLVILYLFI. The Vesicular segment spans residues 216–219; it reads RWTR.

This sequence belongs to the GOSR2 family.

The protein localises to the golgi apparatus membrane. Involved in transport of proteins from the cis/medial-Golgi to the trans-Golgi network. The polypeptide is Membrin-12 (MEMB12) (Arabidopsis thaliana (Mouse-ear cress)).